The chain runs to 699 residues: 1,4-alpha-glucan-branching enzyme (699 aa).

Residues 59-60 and 88-90 each bind substrate; these read NE and WAP. Trp-104 serves as a coordination point for (1,4-alpha-D-glucosyl)n. A substrate-binding site is contributed by 115–118; that stretch reads DYGK. A (1,4-alpha-D-glucosyl)n-binding site is contributed by Lys-140. Tyr-170 carries the post-translational modification Phosphotyrosine. Residue 330–333 participates in substrate binding; it reads EVLR. Residue Asp-354 is the Nucleophile of the active site. Catalysis depends on Glu-409, which acts as the Proton donor.

The protein belongs to the glycosyl hydrolase 13 family. GlgB subfamily. Monomer.

It catalyses the reaction Transfers a segment of a (1-&gt;4)-alpha-D-glucan chain to a primary hydroxy group in a similar glucan chain.. Its pathway is glycan biosynthesis; glycogen biosynthesis. In terms of biological role, glycogen-branching enzyme participates in the glycogen biosynthetic process along with glycogenin and glycogen synthase. Generates alpha-1,6-glucosidic branches from alpha-1,4-linked glucose chains, to increase solubility of the glycogen polymer. The protein is 1,4-alpha-glucan-branching enzyme (GBE1) of Equus caballus (Horse).